A 111-amino-acid polypeptide reads, in one-letter code: Ig kappa chain V-III region PC 7769 (111 aa).

Residues 1-23 (DIVLTQSPASLAVSLGQRATISC) form a framework-1 region. A disulfide bridge links C23 with C92. The complementarity-determining-1 stretch occupies residues 24-38 (KASQSVDYDGDSYMN). Residues 39 to 53 (WYQQKPGQPPKVLIF) are framework-2. A complementarity-determining-2 region spans residues 54–60 (AASNLES). The segment at 61-92 (GIPARFSGSGSGTDFTLNIHPVEEEDAATYYC) is framework-3. Residues 93-101 (QQSNEDPWT) form a complementarity-determining-3 region. The framework-4 stretch occupies residues 102 to 111 (FGSGTKLEIK).

In Mus musculus (Mouse), this protein is Ig kappa chain V-III region PC 7769.